The primary structure comprises 228 residues: Phosphatidylserine decarboxylase proenzyme (228 aa).

Serine 197 (schiff-base intermediate with substrate; via pyruvic acid) is an active-site residue. Serine 197 carries the pyruvic acid (Ser); by autocatalysis modification.

The protein belongs to the phosphatidylserine decarboxylase family. PSD-A subfamily. As to quaternary structure, heterodimer of a large membrane-associated beta subunit and a small pyruvoyl-containing alpha subunit. Pyruvate serves as cofactor. Is synthesized initially as an inactive proenzyme. Formation of the active enzyme involves a self-maturation process in which the active site pyruvoyl group is generated from an internal serine residue via an autocatalytic post-translational modification. Two non-identical subunits are generated from the proenzyme in this reaction, and the pyruvate is formed at the N-terminus of the alpha chain, which is derived from the carboxyl end of the proenzyme. The post-translation cleavage follows an unusual pathway, termed non-hydrolytic serinolysis, in which the side chain hydroxyl group of the serine supplies its oxygen atom to form the C-terminus of the beta chain, while the remainder of the serine residue undergoes an oxidative deamination to produce ammonia and the pyruvoyl prosthetic group on the alpha chain.

The protein resides in the cell membrane. It catalyses the reaction a 1,2-diacyl-sn-glycero-3-phospho-L-serine + H(+) = a 1,2-diacyl-sn-glycero-3-phosphoethanolamine + CO2. The protein operates within phospholipid metabolism; phosphatidylethanolamine biosynthesis; phosphatidylethanolamine from CDP-diacylglycerol: step 2/2. In terms of biological role, catalyzes the formation of phosphatidylethanolamine (PtdEtn) from phosphatidylserine (PtdSer). This Phocaeicola vulgatus (strain ATCC 8482 / DSM 1447 / JCM 5826 / CCUG 4940 / NBRC 14291 / NCTC 11154) (Bacteroides vulgatus) protein is Phosphatidylserine decarboxylase proenzyme.